A 349-amino-acid chain; its full sequence is MDIKTALSRIVGHLDLSTAEMSDVMREIMTGQCTDAQIGAFMMAMRMKSESIDEIVGAVSVMRELADKVELKTLDGVVDVVGTGGDGANIFNVSTASSFVVAAAGCTVAKHGNRAVSGKSGSADLLEAAGIYLNLTPVQVARCIDNVGIGFMFAQSHHGAMKHAAGPRKDLGLRTLFNMLGPLTNPAGVKHQVVGVFSQALCRPLAEVLQRMGSKHVLVVHSKDGLDEFSLAAPTFVAELKNDQITEYWVEPEDLGMKSQSLHGLAVESPAASLELIRDALGRRKTENGQKAAEMIVLNAGAALYAADHAYSLKEGVALAHDALHTGLAREKLEELGAFTAVFKMENEG.

5-phospho-alpha-D-ribose 1-diphosphate contacts are provided by residues G82, 85–86 (GD), 92–95 (NVST), 110–118 (KHGNRAVSG), and S122. G82 contacts anthranilate. Residue S94 coordinates Mg(2+). N113 is an anthranilate binding site. Position 168 (R168) interacts with anthranilate. Residues D227 and E228 each contribute to the Mg(2+) site.

This sequence belongs to the anthranilate phosphoribosyltransferase family. In terms of assembly, homodimer. Mg(2+) is required as a cofactor.

The catalysed reaction is N-(5-phospho-beta-D-ribosyl)anthranilate + diphosphate = 5-phospho-alpha-D-ribose 1-diphosphate + anthranilate. The protein operates within amino-acid biosynthesis; L-tryptophan biosynthesis; L-tryptophan from chorismate: step 2/5. Its function is as follows. Catalyzes the transfer of the phosphoribosyl group of 5-phosphorylribose-1-pyrophosphate (PRPP) to anthranilate to yield N-(5'-phosphoribosyl)-anthranilate (PRA). The protein is Anthranilate phosphoribosyltransferase of Pseudomonas fluorescens (strain SBW25).